Consider the following 162-residue polypeptide: NADH-quinone oxidoreductase subunit I (162 aa).

4Fe-4S ferredoxin-type domains lie at 52-82 and 93-122; these read LRRYPNGEERCIACKLCEAICPAQAITIEAG and TRYDIDMVKCIYCGMCQEACPVDAIVEGPN. Residues cysteine 62, cysteine 65, cysteine 68, cysteine 72, cysteine 102, cysteine 105, cysteine 108, and cysteine 112 each coordinate [4Fe-4S] cluster.

It belongs to the complex I 23 kDa subunit family. As to quaternary structure, NDH-1 is composed of 14 different subunits. Subunits NuoA, H, J, K, L, M, N constitute the membrane sector of the complex. The cofactor is [4Fe-4S] cluster.

The protein resides in the cell inner membrane. The catalysed reaction is a quinone + NADH + 5 H(+)(in) = a quinol + NAD(+) + 4 H(+)(out). Functionally, NDH-1 shuttles electrons from NADH, via FMN and iron-sulfur (Fe-S) centers, to quinones in the respiratory chain. The immediate electron acceptor for the enzyme in this species is believed to be ubiquinone. Couples the redox reaction to proton translocation (for every two electrons transferred, four hydrogen ions are translocated across the cytoplasmic membrane), and thus conserves the redox energy in a proton gradient. This chain is NADH-quinone oxidoreductase subunit I, found in Methylobacterium nodulans (strain LMG 21967 / CNCM I-2342 / ORS 2060).